Consider the following 444-residue polypeptide: Methylenetetrahydrofolate--tRNA-(uracil-5-)-methyltransferase TrmFO (444 aa).

An FAD-binding site is contributed by 10 to 15; sequence GAGLAG.

The protein belongs to the MnmG family. TrmFO subfamily. It depends on FAD as a cofactor.

It is found in the cytoplasm. It carries out the reaction uridine(54) in tRNA + (6R)-5,10-methylene-5,6,7,8-tetrahydrofolate + NADH + H(+) = 5-methyluridine(54) in tRNA + (6S)-5,6,7,8-tetrahydrofolate + NAD(+). The enzyme catalyses uridine(54) in tRNA + (6R)-5,10-methylene-5,6,7,8-tetrahydrofolate + NADPH + H(+) = 5-methyluridine(54) in tRNA + (6S)-5,6,7,8-tetrahydrofolate + NADP(+). In terms of biological role, catalyzes the folate-dependent formation of 5-methyl-uridine at position 54 (M-5-U54) in all tRNAs. This chain is Methylenetetrahydrofolate--tRNA-(uracil-5-)-methyltransferase TrmFO, found in Streptococcus uberis (strain ATCC BAA-854 / 0140J).